The primary structure comprises 403 residues: Cytochrome P450 monooxygenase ustC (403 aa).

An N-terminal signal peptide occupies residues 1–18 (MSPFIFAVTLTFAILALG). N52 and N92 each carry an N-linked (GlcNAc...) asparagine glycan. Residue C318 participates in heme binding.

This sequence belongs to the cytochrome P450 family. Heme is required as a cofactor.

It participates in mycotoxin biosynthesis. Cytochrome P450 monooxygenase; part of the gene cluster that mediates the biosynthesis of the secondary metabolite ustiloxin B, an antimitotic tetrapeptide. First, ustA is processed by the subtilisin-like endoprotease Kex2 that is outside the ustiloxin B gene cluster, at the C-terminal side of Arg-Lys, after transfer to Golgi apparatus through the endoplasmic reticulum (ER). Cleavage by KEX2 generates 16 peptides YAIG-I to YAIG-XVI. To process the precursor peptide further, at least two peptidases are necessary to cleave the N-terminal and C-terminal sides of the Tyr-Ala-Ile-Gly core peptide which serves as backbone for the synthesis of ustiloxin B, through cyclization and modification of the tyrosine with a non-protein coding amino acid, norvaline. One of the two peptidases must be the serine peptidase ustP; and the other pepdidase is probably ustH. Macrocyclization of the core peptide derived from ustA requires the tyrosinase ustQ, as well as the homologous oxidases ustYa and ustYb, and leads to the production of the first cyclization product N-desmethylustiloxin F. For the formation of N-desmethylustiloxin F, three oxidation steps are required, hydroxylation at the benzylic position, hydroxylation at either the aromatic ring of Tyr or beta-position of Ile, and oxidative cyclization. UstQ may catalyze the oxidation of a phenol moiety, whereas the ustYa and ustYb are most likely responsible for the remaining two-step oxidations. N-desmethylustiloxin F is then methylated by ustM to yield ustiloxin F which in turn substrate of the cytochrome P450 monooxygenase ustC which catalyzes the formation of S-deoxyustiloxin H. The flavoprotein monooxygenases ustF1 and ustF2 then participate in the modification of the side chain of S-deoxyustiloxin H, leading to the synthesis of an oxime intermediate, via ustiloxin H. Finally, carboxylative dehydration performed by the cysteine desulfurase-like protein ustD yields ustiloxin B. This is Cytochrome P450 monooxygenase ustC from Aspergillus flavus (strain ATCC 200026 / FGSC A1120 / IAM 13836 / NRRL 3357 / JCM 12722 / SRRC 167).